A 282-amino-acid chain; its full sequence is Probable endonuclease 4 (282 aa).

Zn(2+)-binding residues include H69, H109, E145, D179, H182, H216, D229, H231, and E261.

The protein belongs to the AP endonuclease 2 family. The cofactor is Zn(2+).

It catalyses the reaction Endonucleolytic cleavage to 5'-phosphooligonucleotide end-products.. Its function is as follows. Endonuclease IV plays a role in DNA repair. It cleaves phosphodiester bonds at apurinic or apyrimidinic (AP) sites, generating a 3'-hydroxyl group and a 5'-terminal sugar phosphate. This is Probable endonuclease 4 from Edwardsiella ictaluri (strain 93-146).